A 558-amino-acid chain; its full sequence is Phosphatidylserine lipase ABHD16A (558 aa).

2 helical membrane-spanning segments follow: residues 60 to 80 (ILAL…FAFF) and 93 to 113 (VVPF…VACL). The Cytoplasmic segment spans residues 114-558 (RGIGRWTNPQ…AQHFQMPWHL (445 aa)). An AB hydrolase-1 domain is found at 281–406 (LVICCEGNAG…ALVTRTVRQH (126 aa)). Catalysis depends on charge relay system residues S355, D430, and H507.

It belongs to the AB hydrolase superfamily. ABHD16 family.

The protein localises to the membrane. It catalyses the reaction 1-heptadecanoyl-2-(5Z,8Z,11Z,14Z-eicosatetraenoyl)-sn-glycero-3-phosphoserine + H2O = 1-heptadecanoyl-sn-glycero-3-phosphoserine + (5Z,8Z,11Z,14Z)-eicosatetraenoate + H(+). It carries out the reaction 1-hexadecanoyl-2-(9Z-octadecenoyl)-sn-glycero-3-phospho-L-serine + H2O = 1-hexadecanoyl-sn-glycero-3-phospho-L-serine + (9Z)-octadecenoate + H(+). The catalysed reaction is 1-octadecanoyl-2-(9Z,12Z-octadecadienoyl)-sn-glycero-3-phosphoserine + H2O = 1-octadecanoyl-sn-glycero-3-phosphoserine + (9Z,12Z)-octadecadienoate + H(+). The enzyme catalyses 1-heptadecanoyl-2-(5Z,8Z,11Z,14Z-eicosatetraenoyl)-sn-glycero-3-phosphocholine + H2O = 1-heptadecanoyl-sn-glycero-3-phosphocholine + (5Z,8Z,11Z,14Z)-eicosatetraenoate + H(+). It catalyses the reaction 1-hexadecanoyl-2-(9Z-octadecenoyl)-sn-glycero-3-phosphoglycerol + H2O = 1-hexadecanoyl-sn-glycero-3-phosphoglycerol + (9Z)-octadecenoate + H(+). It carries out the reaction 1-hexadecanoyl-2-(9Z-octadecenoyl)-sn-glycero-3-phospho-(1D-myo-inositol) + H2O = 1-hexadecanoyl-sn-glycero-3-phospho-(1D-myo-inositol) + (9Z)-octadecenoate + H(+). The catalysed reaction is 1-heptadecanoyl-2-(5Z,8Z,11Z,14Z-eicosatetraenoyl)-sn-glycero-3-phosphoethanolamine + H2O = 1-heptadecanoyl-sn-glycero-3-phosphoethanolamine + (5Z,8Z,11Z,14Z)-eicosatetraenoate + H(+). The enzyme catalyses 1-hexadecanoyl-2-(9Z-octadecenoyl)-sn-glycero-3-phospho-(1'-sn-glycerol) + H2O = 1-hexadecanoyl-sn-glycero-3-phospho-(1'-sn-glycerol) + (9Z)-octadecenoate + H(+). It catalyses the reaction Hydrolyzes glycerol monoesters of long-chain fatty acids.. It carries out the reaction 1-tetradecanoylglycerol + H2O = tetradecanoate + glycerol + H(+). The catalysed reaction is 2-hexadecanoylglycerol + H2O = glycerol + hexadecanoate + H(+). The enzyme catalyses 1-(9Z-octadecenoyl)-glycerol + H2O = glycerol + (9Z)-octadecenoate + H(+). It catalyses the reaction 2-(9Z-octadecenoyl)-glycerol + H2O = glycerol + (9Z)-octadecenoate + H(+). It carries out the reaction 2-(9Z,12Z-octadecadienoyl)-glycerol + H2O = (9Z,12Z)-octadecadienoate + glycerol + H(+). The catalysed reaction is 1-(5Z,8Z,11Z,14Z-eicosatetraenoyl)-glycerol + H2O = glycerol + (5Z,8Z,11Z,14Z)-eicosatetraenoate + H(+). The enzyme catalyses 2-(5Z,8Z,11Z,14Z-eicosatetraenoyl)-glycerol + H2O = glycerol + (5Z,8Z,11Z,14Z)-eicosatetraenoate + H(+). It catalyses the reaction prostaglandin D2-1-glycerol ester + H2O = prostaglandin D2 + glycerol + H(+). It carries out the reaction 2-glyceryl-15-deoxy-Delta(12,14)-prostaglandin J2 + H2O = 15-deoxy-Delta(12,14)-prostaglandin J2 + glycerol + H(+). The catalysed reaction is 1-(9Z,12Z-octadecadienoyl)-glycerol + H2O = (9Z,12Z)-octadecadienoate + glycerol + H(+). Specifically inhibited by alpha-alkylidene-beta-lactone KC01 ((Z)-6-(2-Oxo-4-tridecyloxetan-3-ylidene)hexanamide). Functionally, phosphatidylserine (PS) lipase that mediates the hydrolysis of phosphatidylserine to generate lysophosphatidylserine (LPS). LPS constitutes a class of signaling lipids that regulates immunological and neurological processes. Has no activity towards diacylglycerol, triacylglycerol or lysophosphatidylserine lipase. Also has monoacylglycerol lipase activity, with preference for 1-(9Z,12Z-octadecadienoyl)-glycerol (1-LG) and 2-glyceryl-15-deoxy-Delta(12,14)-prostaglandin J2 (15d-PGJ(2)-G). The protein is Phosphatidylserine lipase ABHD16A of Mus musculus (Mouse).